The chain runs to 373 residues: Septin homolog spn3 (373 aa).

The 277-residue stretch at 10–286 (KGIPLNLMVV…ETYRTEKLST (277 aa)) folds into the Septin-type G domain. A G1 motif region spans residues 20-27 (GDVGLGRT). Position 20–27 (20–27 (GDVGLGRT)) interacts with GTP. A G3 motif region spans residues 79 to 82 (DTPH). The tract at residues 161–164 (AKAD) is G4 motif. Residues 162–170 (KADSLTAQE) and Arg235 contribute to the GTP site. Ser303 is modified (phosphoserine). Positions 311–357 (EDRLRAIELSVQKEIEEKRRQLLAREEALRALEEKLAASTAAMANAS) form a coiled coil.

Belongs to the TRAFAC class TrmE-Era-EngA-EngB-Septin-like GTPase superfamily. Septin GTPase family. Component of the septin complex composed of two copies of each spn1, spn2, spn3 and spn4.

The protein localises to the cytoplasm. It is found in the cell cortex. In terms of biological role, plays a role in the cell cycle. Involved in a late stage of septum formation leading to the separation of the daughter cells. The polypeptide is Septin homolog spn3 (spn3) (Schizosaccharomyces pombe (strain 972 / ATCC 24843) (Fission yeast)).